A 55-amino-acid polypeptide reads, in one-letter code: Large ribosomal subunit protein bL33 (55 aa).

The protein belongs to the bacterial ribosomal protein bL33 family.

This is Large ribosomal subunit protein bL33 from Azoarcus sp. (strain BH72).